A 611-amino-acid chain; its full sequence is Leukotriene A-4 hydrolase (611 aa).

The residue at position 73 (Lys73) is an N6-acetyllysine. A peptide is bound by residues Gln135–Gln137 and Pro267–Glu272. His296 provides a ligand contact to Zn(2+). Glu297 acts as the Proton acceptor in catalysis. Positions 300 and 319 each coordinate Zn(2+). Residue Lys337 is modified to N6-acetyllysine. Tyr384 acts as the Proton donor in catalysis. A Phosphoserine modification is found at Ser416. A peptide is bound at residue Arg564 to Lys566. At Lys573 the chain carries N6-acetyllysine.

Belongs to the peptidase M1 family. Zn(2+) is required as a cofactor. Post-translationally, phosphorylation at Ser-416 inhibits enzymatic activity.

The protein resides in the cytoplasm. It catalyses the reaction leukotriene A4 + H2O = leukotriene B4. The protein operates within lipid metabolism; leukotriene B4 biosynthesis. Inhibited by bestatin. Subject to suicide inhibition by leukotriene A4. Functionally, epoxide hydrolase that catalyzes the final step in the biosynthesis of the pro-inflammatory mediator leukotriene B4. Also has aminopeptidase activity. This chain is Leukotriene A-4 hydrolase (LTA4H), found in Chinchilla lanigera (Long-tailed chinchilla).